The following is a 115-amino-acid chain: MHEYSIVTALIEECERHAFANNASKVSRVEIKLGILSGVEPELLRTAFETFKLEGICREANLVMNIQPLVLRCLDCGQSTEHSERSVICSHCQSGQTKVLDGEDMMLMQLELEQA.

Residue H2 participates in Ni(2+) binding. Residues C73, C76, C89, and C92 each contribute to the Zn(2+) site.

The protein belongs to the HypA/HybF family.

Functionally, involved in the maturation of [NiFe] hydrogenases. Required for nickel insertion into the metal center of the hydrogenase. This chain is Hydrogenase maturation factor HypA, found in Shewanella halifaxensis (strain HAW-EB4).